A 631-amino-acid polypeptide reads, in one-letter code: Phosphomethylpyrimidine synthase (631 aa).

Substrate is bound by residues N239, M268, Y297, H333, 353–355, 394–397, and E433; these read SRG and DGLR. Position 437 (H437) interacts with Zn(2+). Y460 serves as a coordination point for substrate. Zn(2+) is bound at residue H501. Residues C581, C584, and C589 each coordinate [4Fe-4S] cluster.

This sequence belongs to the ThiC family. Homodimer. [4Fe-4S] cluster is required as a cofactor.

The enzyme catalyses 5-amino-1-(5-phospho-beta-D-ribosyl)imidazole + S-adenosyl-L-methionine = 4-amino-2-methyl-5-(phosphooxymethyl)pyrimidine + CO + 5'-deoxyadenosine + formate + L-methionine + 3 H(+). The protein operates within cofactor biosynthesis; thiamine diphosphate biosynthesis. Functionally, catalyzes the synthesis of the hydroxymethylpyrimidine phosphate (HMP-P) moiety of thiamine from aminoimidazole ribotide (AIR) in a radical S-adenosyl-L-methionine (SAM)-dependent reaction. In Salmonella heidelberg (strain SL476), this protein is Phosphomethylpyrimidine synthase.